We begin with the raw amino-acid sequence, 534 residues long: Chaperonin GroEL, chloroplastic (534 aa).

ATP is bound by residues Thr-29–Pro-32, Asp-86–Thr-90, Gly-414, and Asp-496.

The protein belongs to the chaperonin (HSP60) family. In terms of assembly, forms a cylinder of 14 subunits composed of two heptameric rings stacked back-to-back. Interacts with the co-chaperonin GroES.

The protein resides in the plastid. It is found in the chloroplast. The catalysed reaction is ATP + H2O + a folded polypeptide = ADP + phosphate + an unfolded polypeptide.. Functionally, together with its co-chaperonin GroES, plays an essential role in assisting protein folding. The GroEL-GroES system forms a nano-cage that allows encapsulation of the non-native substrate proteins and provides a physical environment optimized to promote and accelerate protein folding. The polypeptide is Chaperonin GroEL, chloroplastic (Galdieria sulphuraria (Red alga)).